The sequence spans 444 residues: Serine carboxypeptidase-like 50 (444 aa).

A signal peptide spans Met1 to Ser22. A disulfide bridge connects residues Cys79 and Cys308. Ser170 is a catalytic residue. Asn263 is a glycosylation site (N-linked (GlcNAc...) asparagine). Residue Asp345 is part of the active site. An N-linked (GlcNAc...) asparagine glycan is attached at Asn361. Residue His403 is part of the active site.

This sequence belongs to the peptidase S10 family. Ubiquitous.

The protein resides in the secreted. In terms of biological role, probable carboxypeptidase. The polypeptide is Serine carboxypeptidase-like 50 (SCPL50) (Arabidopsis thaliana (Mouse-ear cress)).